The sequence spans 63 residues: MKISCFLLLVLSLYLFQVNQATDQDTAKCVQKKNVCYYFECPWLSISVSTCYKGKAKCCQKRY.

An N-terminal signal peptide occupies residues 1–21; it reads MKISCFLLLVLSLYLFQVNQA. Disulfide bonds link Cys29-Cys58, Cys36-Cys51, and Cys41-Cys59.

Belongs to the beta-defensin family.

It localises to the secreted. Functionally, has antibacterial activity. The chain is Beta-defensin 38 (Defb38) from Rattus norvegicus (Rat).